A 506-amino-acid polypeptide reads, in one-letter code: ATP-dependent rRNA helicase RRP3 (506 aa).

Disordered regions lie at residues 1 to 22 (MSGKVDKKKGSSVKKTEGKSKE) and 37 to 88 (NQKK…FESF). The segment covering 49–69 (SDQEDDPSESEEEEGSDSEDV) has biased composition (acidic residues). Residues 86–114 (ESFSDLDLVPELIEACKNLNFAKPTPIQA) carry the Q motif motif. Residues 117 to 289 (IPPALQGHDI…RASLTNPVKC (173 aa)) form the Helicase ATP-binding domain. 130–137 (AQTGSGKT) serves as a coordination point for ATP. The DEAD box motif lies at 236–239 (DEAD). A Helicase C-terminal domain is found at 312–460 (LKNTYLIYLM…KENVNKDAIL (149 aa)). Positions 485 to 506 (IARGKGRRGRMAARDDMDKGER) are disordered. Over residues 496–506 (AARDDMDKGER) the composition is skewed to basic and acidic residues.

The protein belongs to the DEAD box helicase family. DDX47/RRP3 subfamily. In terms of assembly, interacts with the SSU processome.

The protein resides in the nucleus. The enzyme catalyses ATP + H2O = ADP + phosphate + H(+). ATP-dependent rRNA helicase required for pre-ribosomal RNA processing. Involved in the maturation of the 35S-pre-rRNA and to its cleavage to mature 18S rRNA. In Vanderwaltozyma polyspora (strain ATCC 22028 / DSM 70294 / BCRC 21397 / CBS 2163 / NBRC 10782 / NRRL Y-8283 / UCD 57-17) (Kluyveromyces polysporus), this protein is ATP-dependent rRNA helicase RRP3.